Reading from the N-terminus, the 121-residue chain is Small basic protein (121 aa).

A run of 3 helical transmembrane segments spans residues 2-22 (WLPV…NLTI), 29-49 (YLSL…RAHL), and 57-77 (VFVS…FLGV).

Belongs to the sbp family.

It localises to the cell membrane. The chain is Small basic protein (sbp) from Bacillus subtilis (strain 168).